We begin with the raw amino-acid sequence, 486 residues long: Zinc finger CCCH domain-containing protein 49 (486 aa).

A C3H1-type zinc finger spans residues 157–184 (RNRAHVCSFYVRGECTRGAECPYRHEMP). Positions 228-301 (RTLYIGGLDS…VRLKLMWGKP (74 aa)) constitute an RRM domain. 2 disordered regions span residues 329–348 (SQQQ…QQQP) and 379–486 (LVES…NGMT). Low complexity-rich tracts occupy residues 389–407 (PGPQ…GQSY) and 415–430 (YHGG…YGGY). Residues 431 to 444 (MPPPRMPYQQPPQY) are compositionally biased toward pro residues. The segment covering 445–486 (PAYQPMLAPPAQSQASSLQQPAPATQQLGQGPQQQTTQNGMT) has biased composition (low complexity).

The protein is Zinc finger CCCH domain-containing protein 49 of Oryza sativa subsp. japonica (Rice).